A 259-amino-acid polypeptide reads, in one-letter code: MLLKLAPAFTLLNSHGENLSPMLSTSSQGFVLKNFSTKSRNGLLVVCASKGSNTKPLTGVVFEPFEEVKKELMLVPTVPQVSLARHKYSDQCEAAVNEQINVEYNVSYVYHGMYAYFDRDNVALKGLARFFKESSEEERGHAEKLMEYQNKRGGKVKLQSILMPLSEFDHAEEGDALYAMELALSLAKLTNQKLLNLHAVATRNNDVQLADFVESKYLREQVEAIKMISEYVAQLRRVGKGHGVWHFDQMLLQEEEVVA.

The transit peptide at 1 to 52 (MLLKLAPAFTLLNSHGENLSPMLSTSSQGFVLKNFSTKSRNGLLVVCASKGS) directs the protein to the chloroplast. Positions 53–85 (NTKPLTGVVFEPFEEVKKELMLVPTVPQVSLAR) are extension peptide (EP). The 154-residue stretch at 86 to 239 (HKYSDQCEAA…EYVAQLRRVG (154 aa)) folds into the Ferritin-like diiron domain. Glu-103, Glu-138, His-141, and Gln-221 together coordinate Fe cation.

It belongs to the ferritin family. As to quaternary structure, oligomer of 24 subunits. There are two types of subunits: L (light) chain and H (heavy) chain. The major chain can be light or heavy, depending on the species and tissue type. The functional molecule forms a roughly spherical shell with a diameter of 12 nm and contains a central cavity into which the insoluble mineral iron core is deposited.

It is found in the plastid. Its subcellular location is the chloroplast. The enzyme catalyses 4 Fe(2+) + O2 + 4 H(+) = 4 Fe(3+) + 2 H2O. Functionally, stores iron in a soluble, non-toxic, readily available form. Important for iron homeostasis. Has ferroxidase activity. Iron is taken up in the ferrous form and deposited as ferric hydroxides after oxidation. The protein is Ferritin-2, chloroplastic (FER2) of Nicotiana tabacum (Common tobacco).